The chain runs to 422 residues: Tyrosine--tRNA ligase (422 aa).

Tyr35 provides a ligand contact to L-tyrosine. The 'HIGH' region signature appears at 40–49; it reads PTADSLHIGH. L-tyrosine contacts are provided by Tyr170 and Gln174. Positions 232-236 match the 'KMSKS' region motif; that stretch reads KFGKT. Residue Lys235 participates in ATP binding. The region spanning 355 to 421 is the S4 RNA-binding domain; that stretch reads LTLVDLLVES…GKKKYFLVTY (67 aa).

The protein belongs to the class-I aminoacyl-tRNA synthetase family. TyrS type 1 subfamily. In terms of assembly, homodimer.

The protein resides in the cytoplasm. The enzyme catalyses tRNA(Tyr) + L-tyrosine + ATP = L-tyrosyl-tRNA(Tyr) + AMP + diphosphate + H(+). Functionally, catalyzes the attachment of tyrosine to tRNA(Tyr) in a two-step reaction: tyrosine is first activated by ATP to form Tyr-AMP and then transferred to the acceptor end of tRNA(Tyr). The chain is Tyrosine--tRNA ligase from Bacillus pumilus (strain SAFR-032).